The chain runs to 359 residues: (2E,6E)-farnesyl diphosphate synthase (359 aa).

A disordered region spans residues 1 to 21 (MRGTDEKYGLPPQPDSDRMTR). The isopentenyl diphosphate site is built by K73, R76, and H105. Residues D112 and D116 each contribute to the Mg(2+) site. Positions 112-116 (DDLMD) match the DDXXD motif motif. R121 is a binding site for (2E)-geranyl diphosphate. R122 lines the isopentenyl diphosphate pocket. (2E)-geranyl diphosphate contacts are provided by K201, T202, and Q239. The short motif at 242–246 (DDLLG) is the DDXXD motif element. (2E)-geranyl diphosphate-binding residues include K256 and K266.

The protein belongs to the FPP/GGPP synthase family. Requires Mg(2+) as cofactor.

Its subcellular location is the cytoplasm. It carries out the reaction isopentenyl diphosphate + (2E)-geranyl diphosphate = (2E,6E)-farnesyl diphosphate + diphosphate. It functions in the pathway isoprenoid biosynthesis; farnesyl diphosphate biosynthesis; farnesyl diphosphate from geranyl diphosphate and isopentenyl diphosphate. Its function is as follows. Catalyzes the condensation of isopentenyl pyrophosphate (IPP) with geranyl diphosphate (GPP) to yield (2E,6E)-farnesyl diphosphate (E,E-FPP). May be used for squalene and possibly sterol biosynthesis. The chain is (2E,6E)-farnesyl diphosphate synthase from Mycobacterium bovis (strain ATCC BAA-935 / AF2122/97).